Here is a 187-residue protein sequence, read N- to C-terminus: Threonylcarbamoyl-AMP synthase (187 aa).

The region spanning 3–187 is the YrdC-like domain; it reads EVLPADVAEL…AKSGQVIRKG (185 aa).

The protein belongs to the SUA5 family. TsaC subfamily.

The protein localises to the cytoplasm. It catalyses the reaction L-threonine + hydrogencarbonate + ATP = L-threonylcarbamoyladenylate + diphosphate + H2O. Its function is as follows. Required for the formation of a threonylcarbamoyl group on adenosine at position 37 (t(6)A37) in tRNAs that read codons beginning with adenine. Catalyzes the conversion of L-threonine, HCO(3)(-)/CO(2) and ATP to give threonylcarbamoyl-AMP (TC-AMP) as the acyladenylate intermediate, with the release of diphosphate. The sequence is that of Threonylcarbamoyl-AMP synthase from Shewanella halifaxensis (strain HAW-EB4).